Reading from the N-terminus, the 225-residue chain is UPF0758 protein NMB1038 (225 aa).

In terms of domain architecture, MPN spans 102–224; the sequence is VLSDPDTVAD…VCSFRQLGLM (123 aa). 3 residues coordinate Zn(2+): His173, His175, and Asp186. The short motif at 173–186 is the JAMM motif element; sequence HNHPGGSPEPSQED.

It belongs to the UPF0758 family.

This is UPF0758 protein NMB1038 from Neisseria meningitidis serogroup B (strain ATCC BAA-335 / MC58).